Here is a 177-residue protein sequence, read N- to C-terminus: Probable inosine/xanthosine triphosphatase (177 aa).

It belongs to the YjjX NTPase family. In terms of assembly, homodimer. The cofactor is Mg(2+). It depends on Mn(2+) as a cofactor.

The catalysed reaction is XTP + H2O = XDP + phosphate + H(+). It catalyses the reaction ITP + H2O = IDP + phosphate + H(+). In terms of biological role, phosphatase that hydrolyzes non-canonical purine nucleotides such as XTP and ITP to their respective diphosphate derivatives. Probably excludes non-canonical purines from DNA/RNA precursor pool, thus preventing their incorporation into DNA/RNA and avoiding chromosomal lesions. The protein is Probable inosine/xanthosine triphosphatase of Pyrobaculum arsenaticum (strain DSM 13514 / JCM 11321 / PZ6).